The chain runs to 940 residues: Phosphoenolpyruvate carboxylase (940 aa).

Catalysis depends on residues His138 and Lys603.

The protein belongs to the PEPCase type 1 family. Mg(2+) serves as cofactor.

It catalyses the reaction oxaloacetate + phosphate = phosphoenolpyruvate + hydrogencarbonate. Its function is as follows. Forms oxaloacetate, a four-carbon dicarboxylic acid source for the tricarboxylic acid cycle. The chain is Phosphoenolpyruvate carboxylase from Streptococcus thermophilus (strain ATCC BAA-250 / LMG 18311).